We begin with the raw amino-acid sequence, 231 residues long: 2-C-methyl-D-erythritol 4-phosphate cytidylyltransferase (231 aa).

This sequence belongs to the IspD/TarI cytidylyltransferase family. IspD subfamily. As to quaternary structure, homodimer.

The enzyme catalyses 2-C-methyl-D-erythritol 4-phosphate + CTP + H(+) = 4-CDP-2-C-methyl-D-erythritol + diphosphate. Its pathway is isoprenoid biosynthesis; isopentenyl diphosphate biosynthesis via DXP pathway; isopentenyl diphosphate from 1-deoxy-D-xylulose 5-phosphate: step 2/6. In terms of biological role, catalyzes the formation of 4-diphosphocytidyl-2-C-methyl-D-erythritol from CTP and 2-C-methyl-D-erythritol 4-phosphate (MEP). The protein is 2-C-methyl-D-erythritol 4-phosphate cytidylyltransferase of Citrobacter koseri (strain ATCC BAA-895 / CDC 4225-83 / SGSC4696).